We begin with the raw amino-acid sequence, 64 residues long: DNA-directed RNA polymerase subunit Rpo10 (64 aa).

Zn(2+) contacts are provided by Cys-7, Cys-10, Cys-45, and Cys-46.

Belongs to the archaeal Rpo10/eukaryotic RPB10 RNA polymerase subunit family. Part of the RNA polymerase complex. Zn(2+) is required as a cofactor.

It is found in the cytoplasm. It carries out the reaction RNA(n) + a ribonucleoside 5'-triphosphate = RNA(n+1) + diphosphate. In terms of biological role, DNA-dependent RNA polymerase (RNAP) catalyzes the transcription of DNA into RNA using the four ribonucleoside triphosphates as substrates. This is DNA-directed RNA polymerase subunit Rpo10 from Halorubrum lacusprofundi (strain ATCC 49239 / DSM 5036 / JCM 8891 / ACAM 34).